The primary structure comprises 154 residues: 6,7-dimethyl-8-ribityllumazine synthase (154 aa).

5-amino-6-(D-ribitylamino)uracil is bound by residues F22, 57–59 (VCE), and 81–83 (TVI). (2S)-2-hydroxy-3-oxobutyl phosphate is bound at residue 86–87 (KT). The Proton donor role is filled by H89. V114 provides a ligand contact to 5-amino-6-(D-ribitylamino)uracil. R128 serves as a coordination point for (2S)-2-hydroxy-3-oxobutyl phosphate.

It belongs to the DMRL synthase family. As to quaternary structure, forms an icosahedral capsid composed of 60 subunits, arranged as a dodecamer of pentamers.

The enzyme catalyses (2S)-2-hydroxy-3-oxobutyl phosphate + 5-amino-6-(D-ribitylamino)uracil = 6,7-dimethyl-8-(1-D-ribityl)lumazine + phosphate + 2 H2O + H(+). It participates in cofactor biosynthesis; riboflavin biosynthesis; riboflavin from 2-hydroxy-3-oxobutyl phosphate and 5-amino-6-(D-ribitylamino)uracil: step 1/2. In terms of biological role, catalyzes the formation of 6,7-dimethyl-8-ribityllumazine by condensation of 5-amino-6-(D-ribitylamino)uracil with 3,4-dihydroxy-2-butanone 4-phosphate. This is the penultimate step in the biosynthesis of riboflavin. This chain is 6,7-dimethyl-8-ribityllumazine synthase, found in Wigglesworthia glossinidia brevipalpis.